The following is a 696-amino-acid chain: Zinc finger SWIM domain-containing protein 3 (696 aa).

The SWIM-type zinc-finger motif lies at 531-572 (VDVQLLEDSHQVSKDGCSCSCSFQQWYHLPCRHILALLHTSQ).

The protein is Zinc finger SWIM domain-containing protein 3 (ZSWIM3) of Homo sapiens (Human).